A 146-amino-acid chain; its full sequence is Probable glycine cleavage system H protein 1, mitochondrial (146 aa).

The transit peptide at 1-30 (MLKTLRFGTRAFGQNLNIAKRNFCTRYTND) directs the protein to the mitochondrion. Residues 41-123 (NYRLGITDFA…MGDGWIVEYK (83 aa)) form the Lipoyl-binding domain. N6-lipoyllysine is present on K82.

This sequence belongs to the GcvH family. As to quaternary structure, the glycine cleavage system is composed of four proteins: P, T, L and H. It depends on (R)-lipoate as a cofactor.

It is found in the mitochondrion. In terms of biological role, the glycine cleavage system catalyzes the degradation of glycine. The H protein shuttles the methylamine group of glycine from the P protein to the T protein. The sequence is that of Probable glycine cleavage system H protein 1, mitochondrial (gcvH1) from Dictyostelium discoideum (Social amoeba).